Reading from the N-terminus, the 371-residue chain is Carbamoyl phosphate synthase small chain (371 aa).

The interval 1 to 182 is CPSase; sequence MGVHKKGYLV…KNPIVHTPKN (182 aa). 3 residues coordinate L-glutamine: Ser49, Gly235, and Gly237. A Glutamine amidotransferase type-1 domain is found at 186–371; that stretch reads RVVVLDLGVK…EFVKILEGRK (186 aa). Cys263 (nucleophile) is an active-site residue. Leu264, Gln267, Asn305, Gly307, and Tyr308 together coordinate L-glutamine. Residues His346 and Glu348 contribute to the active site.

Belongs to the CarA family. As to quaternary structure, composed of two chains; the small (or glutamine) chain promotes the hydrolysis of glutamine to ammonia, which is used by the large (or ammonia) chain to synthesize carbamoyl phosphate. Tetramer of heterodimers (alpha,beta)4.

The catalysed reaction is hydrogencarbonate + L-glutamine + 2 ATP + H2O = carbamoyl phosphate + L-glutamate + 2 ADP + phosphate + 2 H(+). It catalyses the reaction L-glutamine + H2O = L-glutamate + NH4(+). The protein operates within amino-acid biosynthesis; L-arginine biosynthesis; carbamoyl phosphate from bicarbonate: step 1/1. Its pathway is pyrimidine metabolism; UMP biosynthesis via de novo pathway; (S)-dihydroorotate from bicarbonate: step 1/3. Small subunit of the glutamine-dependent carbamoyl phosphate synthetase (CPSase). CPSase catalyzes the formation of carbamoyl phosphate from the ammonia moiety of glutamine, carbonate, and phosphate donated by ATP, constituting the first step of 2 biosynthetic pathways, one leading to arginine and/or urea and the other to pyrimidine nucleotides. The small subunit (glutamine amidotransferase) binds and cleaves glutamine to supply the large subunit with the substrate ammonia. This Pyrococcus furiosus (strain ATCC 43587 / DSM 3638 / JCM 8422 / Vc1) protein is Carbamoyl phosphate synthase small chain.